Here is a 94-residue protein sequence, read N- to C-terminus: Aspartyl/glutamyl-tRNA(Asn/Gln) amidotransferase subunit C (94 aa).

Belongs to the GatC family. Heterotrimer of A, B and C subunits.

It carries out the reaction L-glutamyl-tRNA(Gln) + L-glutamine + ATP + H2O = L-glutaminyl-tRNA(Gln) + L-glutamate + ADP + phosphate + H(+). The enzyme catalyses L-aspartyl-tRNA(Asn) + L-glutamine + ATP + H2O = L-asparaginyl-tRNA(Asn) + L-glutamate + ADP + phosphate + 2 H(+). Allows the formation of correctly charged Asn-tRNA(Asn) or Gln-tRNA(Gln) through the transamidation of misacylated Asp-tRNA(Asn) or Glu-tRNA(Gln) in organisms which lack either or both of asparaginyl-tRNA or glutaminyl-tRNA synthetases. The reaction takes place in the presence of glutamine and ATP through an activated phospho-Asp-tRNA(Asn) or phospho-Glu-tRNA(Gln). The protein is Aspartyl/glutamyl-tRNA(Asn/Gln) amidotransferase subunit C of Hydrogenobaculum sp. (strain Y04AAS1).